We begin with the raw amino-acid sequence, 173 residues long: Co-chaperone protein HscB homolog (173 aa).

Residues 5–77 (SHFALFDLEP…SQRARYLLSL (73 aa)) form the J domain.

Belongs to the HscB family. Interacts with HscA and stimulates its ATPase activity.

Functionally, co-chaperone involved in the maturation of iron-sulfur cluster-containing proteins. Seems to help targeting proteins to be folded toward HscA. In Azotobacter vinelandii (strain DJ / ATCC BAA-1303), this protein is Co-chaperone protein HscB homolog.